The chain runs to 183 residues: MKKIKRDKIVGAGKISNYLLLIIMLGGGISFFIVGFLSYFKAFEHIALFSRFVNSDIRFIPQGITMIFYGTMAICLSIYIYFSIYYDIGAGYNEFNLISKKVVVFRKGFPGKNRLIKFVLPIPHLKSVKVMARGGINPKYEVFLYTKNLSRIPIGQVFKLSKLEYQASEIATFLGLAFEQYNL.

A run of 2 helical transmembrane segments spans residues 17-39 (NYLL…FLSY) and 59-81 (FIPQ…IYIY).

Belongs to the Ycf4 family.

It localises to the plastid. Its subcellular location is the chloroplast thylakoid membrane. Functionally, seems to be required for the assembly of the photosystem I complex. This chain is Photosystem I assembly protein Ycf4, found in Cyanidium caldarium (Red alga).